Consider the following 158-residue polypeptide: 6,7-dimethyl-8-ribityllumazine synthase (158 aa).

Residues Phe22, 57–59, and 81–83 each bind 5-amino-6-(D-ribitylamino)uracil; these read AFE and AVI. 86–87 is a (2S)-2-hydroxy-3-oxobutyl phosphate binding site; it reads GT. The active-site Proton donor is His89. Phe114 contributes to the 5-amino-6-(D-ribitylamino)uracil binding site. A (2S)-2-hydroxy-3-oxobutyl phosphate-binding site is contributed by Arg128.

This sequence belongs to the DMRL synthase family. Forms an icosahedral capsid composed of 60 subunits, arranged as a dodecamer of pentamers.

The enzyme catalyses (2S)-2-hydroxy-3-oxobutyl phosphate + 5-amino-6-(D-ribitylamino)uracil = 6,7-dimethyl-8-(1-D-ribityl)lumazine + phosphate + 2 H2O + H(+). Its pathway is cofactor biosynthesis; riboflavin biosynthesis; riboflavin from 2-hydroxy-3-oxobutyl phosphate and 5-amino-6-(D-ribitylamino)uracil: step 1/2. In terms of biological role, catalyzes the formation of 6,7-dimethyl-8-ribityllumazine by condensation of 5-amino-6-(D-ribitylamino)uracil with 3,4-dihydroxy-2-butanone 4-phosphate. This is the penultimate step in the biosynthesis of riboflavin. In Shewanella amazonensis (strain ATCC BAA-1098 / SB2B), this protein is 6,7-dimethyl-8-ribityllumazine synthase.